We begin with the raw amino-acid sequence, 500 residues long: Aspartyl/glutamyl-tRNA(Asn/Gln) amidotransferase subunit B (500 aa).

This sequence belongs to the GatB/GatE family. GatB subfamily. In terms of assembly, heterotrimer of A, B and C subunits.

It catalyses the reaction L-glutamyl-tRNA(Gln) + L-glutamine + ATP + H2O = L-glutaminyl-tRNA(Gln) + L-glutamate + ADP + phosphate + H(+). The enzyme catalyses L-aspartyl-tRNA(Asn) + L-glutamine + ATP + H2O = L-asparaginyl-tRNA(Asn) + L-glutamate + ADP + phosphate + 2 H(+). Functionally, allows the formation of correctly charged Asn-tRNA(Asn) or Gln-tRNA(Gln) through the transamidation of misacylated Asp-tRNA(Asn) or Glu-tRNA(Gln) in organisms which lack either or both of asparaginyl-tRNA or glutaminyl-tRNA synthetases. The reaction takes place in the presence of glutamine and ATP through an activated phospho-Asp-tRNA(Asn) or phospho-Glu-tRNA(Gln). This chain is Aspartyl/glutamyl-tRNA(Asn/Gln) amidotransferase subunit B, found in Rhizobium etli (strain CIAT 652).